A 366-amino-acid polypeptide reads, in one-letter code: Ribosomal RNA large subunit methyltransferase M (366 aa).

S-adenosyl-L-methionine is bound by residues Ser188, 221 to 224 (CPGG), Asp240, Asp260, and Asp277. The active-site Proton acceptor is Lys306.

This sequence belongs to the class I-like SAM-binding methyltransferase superfamily. RNA methyltransferase RlmE family. RlmM subfamily. Monomer.

The protein localises to the cytoplasm. It catalyses the reaction cytidine(2498) in 23S rRNA + S-adenosyl-L-methionine = 2'-O-methylcytidine(2498) in 23S rRNA + S-adenosyl-L-homocysteine + H(+). Catalyzes the 2'-O-methylation at nucleotide C2498 in 23S rRNA. This Erwinia tasmaniensis (strain DSM 17950 / CFBP 7177 / CIP 109463 / NCPPB 4357 / Et1/99) protein is Ribosomal RNA large subunit methyltransferase M.